Consider the following 647-residue polypeptide: MGKIRKLDDQLSNLIAAGEVVERPASVVKELVENSIDANSTSIEIHLEEAGLSKIRIIDNGDGIAEEDCIVAFERHATSKIKDENDLFRIRTLGFRGEALPSIASVSELELITSTGDAPGTHLIIKGGDIIKQEKTASRKGTDITVQNLFFNTPARLKYMKTIHTELGNITDIVYRIAMSHPEVSLKLFHNEKKLLHTSGNGDVRQVLASIYSIQVAKKLVPIEAESLDFTIQGYVTLPEVTRASRNYMSTIVNGRYVRNFVLMKAIQQGYHTLLPVGRYPIGFLSIEMDPMLVDVNVHPAKLEVRFSKEQELLKLIEETLQAAFKKIQLIPDAGVTTKKKEKDESVQEQFQFEHAKPKEPSMPEIVLPTGMDEKQEEPQAVKQPTQLWQPPKQEWQPPQSLVREEQSWQPSTKPIIEEPIQEEKSWDSNEEGFELEELEEEVREIKEIEMNGNDLPPLYPIGQMHGTYIFAQNDKGLYMIDQHAAQERINYEYFRDKVGRVAQEVQELLVPYRIDLSLTEFLRVEEQLEELKKVGLFLEQFGHQSFIVRSHPTWFPKGQETEIIDEMMEQVVKLKKVDIKKLREEAAIMMSCKASIKANQYLTNDQIFALLEELRTTTNPYTCPHGRPILVHHSTYELEKMFKRVM.

A disordered region spans residues 375 to 433 (KQEEPQAVKQPTQLWQPPKQEWQPPQSLVREEQSWQPSTKPIIEEPIQEEKSWDSNEEG). Over residues 387–400 (QLWQPPKQEWQPPQ) the composition is skewed to low complexity.

This sequence belongs to the DNA mismatch repair MutL/HexB family.

In terms of biological role, this protein is involved in the repair of mismatches in DNA. It is required for dam-dependent methyl-directed DNA mismatch repair. May act as a 'molecular matchmaker', a protein that promotes the formation of a stable complex between two or more DNA-binding proteins in an ATP-dependent manner without itself being part of a final effector complex. The protein is DNA mismatch repair protein MutL of Bacillus cereus (strain AH820).